A 126-amino-acid chain; its full sequence is Holo-[acyl-carrier-protein] synthase (126 aa).

Mg(2+) contacts are provided by Asp-9 and Glu-58.

This sequence belongs to the P-Pant transferase superfamily. AcpS family. Mg(2+) is required as a cofactor.

Its subcellular location is the cytoplasm. The enzyme catalyses apo-[ACP] + CoA = holo-[ACP] + adenosine 3',5'-bisphosphate + H(+). Its function is as follows. Transfers the 4'-phosphopantetheine moiety from coenzyme A to a Ser of acyl-carrier-protein. The protein is Holo-[acyl-carrier-protein] synthase of Hamiltonella defensa subsp. Acyrthosiphon pisum (strain 5AT).